The following is a 317-amino-acid chain: WSCD family member CG9164 (317 aa).

The helical transmembrane segment at 8–28 (FFGVSATIIIYIGGVLFLSMN) threads the bilayer. N-linked (GlcNAc...) asparagine glycans are attached at residues Asn151, Asn227, and Asn233.

This sequence belongs to the WSCD family.

It is found in the membrane. This is WSCD family member CG9164 from Drosophila melanogaster (Fruit fly).